Consider the following 591-residue polypeptide: MSEPAIARLIGEGVERPEASLPIDINYAKLTEWLVTRQKIPKDWHKRLQVIQAKAAEAVKELPPGTLSSLTDGADAPVDYMRAVEIRDKLASTSERTMFGGLQGPAATWDKIVKAYEKQFVYLGEAGQCLVQNVDFEIPYLRRNAAKLAGQLADGERKQGEYTRAAAACAAKYKEECKKLGISGAAVRAELRALAGELPGLLRGVVDSLHQPRLQEAAEYYAAFTRFAHAPRAGAPSSAKGPASSASAPPALEPESMLPVLFEIRNRRTAPPEAESGAAGAGASGQGGGIEIDWGDSGGDAGGAGVAAIDIDWDAPTAAPEGDAAAAAGPAVDINWDFDMADLAAAAGDDAGGTAAAPTADASAGPVGIDWDIEVDAAGDAAADANNRAGDVAEGEAAASLSGGGGGGASSGDPDDVAAARLERDADYRARLVDDLTELRAFLAQRKSDLAAGGSELTATALPDAVSSVDAAAVASMLGSVQAVLGQLGTPRFRQLLLIATSPRYLDRLEARLQRQAGAEAKMLAAAAEAVARQHEARAGLAAQAPRTAALVARCRRLKGVVERGIAASLGGKRSVNVLGEINNVLASAGQ.

Over residues 232–250 (RAGAPSSAKGPASSASAPP) the composition is skewed to low complexity. Disordered regions lie at residues 232 to 252 (RAGA…PPAL) and 269 to 303 (TAPP…DAGG). A compositionally biased stretch (gly residues) spans 279 to 303 (AGAGASGQGGGIEIDWGDSGGDAGG). 3 short sequence motifs (shuffled ATG8-binding motif) span residues 311-314 (IDWD), 334-337 (INWD), and 369-372 (IDWD). Over residues 386-401 (NNRAGDVAEGEAAASL) the composition is skewed to low complexity. The segment at 386–416 (NNRAGDVAEGEAAASLSGGGGGGASSGDPDD) is disordered.

It belongs to the CDK5RAP3 family. Substrate adapter component of the UFM1 ribosome E3 ligase (UREL) complex. Interacts with ATG8 family proteins.

Its function is as follows. Substrate adapter of E3 ligase complexes mediating ufmylation, the covalent attachment of the ubiquitin-like modifier UFM1 to substrate proteins, and which is involved in various processes, such as ribosome recycling and reticulophagy (also called ER-phagy). In Chlamydomonas reinhardtii (Chlamydomonas smithii), this protein is CDK5RAP3 protein homolog.